The chain runs to 129 residues: Small ribosomal subunit protein uS11 (129 aa).

It belongs to the universal ribosomal protein uS11 family. In terms of assembly, part of the 30S ribosomal subunit. Interacts with proteins S7 and S18. Binds to IF-3.

Functionally, located on the platform of the 30S subunit, it bridges several disparate RNA helices of the 16S rRNA. Forms part of the Shine-Dalgarno cleft in the 70S ribosome. This is Small ribosomal subunit protein uS11 from Geobacillus thermodenitrificans (strain NG80-2).